The primary structure comprises 454 residues: uncharacterized protein (454 aa).

This is an uncharacterized protein from Rickettsia prowazekii (strain Madrid E).